We begin with the raw amino-acid sequence, 259 residues long: Adenosylcobinamide-GDP ribazoletransferase (259 aa).

Helical transmembrane passes span 36 to 56 (FSPL…ILLL), 65 to 85 (MPFI…VDGL), 108 to 128 (IGAS…AALF), 133 to 153 (LILF…IWAI), 175 to 195 (GFLI…FILI), 201 to 221 (IIST…ALII), and 238 to 258 (GASV…ILPA).

Belongs to the CobS family. Requires Mg(2+) as cofactor.

Its subcellular location is the cell inner membrane. It catalyses the reaction alpha-ribazole + adenosylcob(III)inamide-GDP = adenosylcob(III)alamin + GMP + H(+). The catalysed reaction is alpha-ribazole 5'-phosphate + adenosylcob(III)inamide-GDP = adenosylcob(III)alamin 5'-phosphate + GMP + H(+). Its pathway is cofactor biosynthesis; adenosylcobalamin biosynthesis; adenosylcobalamin from cob(II)yrinate a,c-diamide: step 7/7. Joins adenosylcobinamide-GDP and alpha-ribazole to generate adenosylcobalamin (Ado-cobalamin). Also synthesizes adenosylcobalamin 5'-phosphate from adenosylcobinamide-GDP and alpha-ribazole 5'-phosphate. In Prochlorococcus marinus (strain SARG / CCMP1375 / SS120), this protein is Adenosylcobinamide-GDP ribazoletransferase.